The primary structure comprises 1163 residues: Carbamoyl phosphate synthase large chain (1163 aa).

A carboxyphosphate synthetic domain region spans residues 1–456 (MPKRQDIKSI…SLQKALRGLE (456 aa)). Arg-129 contributes to the ATP binding site. Residues 148 to 170 (LANATDIKDHDRKSHEAERSALK) are disordered. The span at 153 to 170 (DIKDHDRKSHEAERSALK) shows a compositional bias: basic and acidic residues. One can recognise an ATP-grasp 1 domain in the interval 185–381 (LENQWNLGEG…IAKIAAKLAV (197 aa)). 11 residues coordinate ATP: Arg-222, Gly-228, Gly-229, Glu-261, Val-263, Glu-268, Gly-294, Val-295, His-296, Gln-338, and Glu-352. Mg(2+) is bound by residues Gln-338, Glu-352, and Asn-354. Mn(2+) contacts are provided by Gln-338, Glu-352, and Asn-354. The segment at 457–614 (TGLTGLDEIE…PFVGAARSEA (158 aa)) is oligomerization domain. Positions 615–1026 (QVSDRKKVVI…AFAKSQLGAG (412 aa)) are carbamoyl phosphate synthetic domain. The region spanning 743 to 955 (QKLLMKLDLN…IAKIAARVMA (213 aa)) is the ATP-grasp 2 domain. ATP-binding residues include Arg-779, Ser-839, Leu-841, Glu-846, Gly-871, Ile-872, His-873, Ser-874, Gln-914, and Glu-926. Residues Gln-914, Glu-926, and Asn-928 each coordinate Mg(2+). Residues Gln-914, Glu-926, and Asn-928 each coordinate Mn(2+). Residues 1027-1163 (VDLPRDGTVF…VRPLQSYFET (137 aa)) form the MGS-like domain. Residues 1027–1163 (VDLPRDGTVF…VRPLQSYFET (137 aa)) form an allosteric domain region.

Belongs to the CarB family. As to quaternary structure, composed of two chains; the small (or glutamine) chain promotes the hydrolysis of glutamine to ammonia, which is used by the large (or ammonia) chain to synthesize carbamoyl phosphate. Tetramer of heterodimers (alpha,beta)4. Mg(2+) serves as cofactor. Mn(2+) is required as a cofactor.

It carries out the reaction hydrogencarbonate + L-glutamine + 2 ATP + H2O = carbamoyl phosphate + L-glutamate + 2 ADP + phosphate + 2 H(+). The enzyme catalyses hydrogencarbonate + NH4(+) + 2 ATP = carbamoyl phosphate + 2 ADP + phosphate + 2 H(+). The protein operates within amino-acid biosynthesis; L-arginine biosynthesis; carbamoyl phosphate from bicarbonate: step 1/1. Its pathway is pyrimidine metabolism; UMP biosynthesis via de novo pathway; (S)-dihydroorotate from bicarbonate: step 1/3. Large subunit of the glutamine-dependent carbamoyl phosphate synthetase (CPSase). CPSase catalyzes the formation of carbamoyl phosphate from the ammonia moiety of glutamine, carbonate, and phosphate donated by ATP, constituting the first step of 2 biosynthetic pathways, one leading to arginine and/or urea and the other to pyrimidine nucleotides. The large subunit (synthetase) binds the substrates ammonia (free or transferred from glutamine from the small subunit), hydrogencarbonate and ATP and carries out an ATP-coupled ligase reaction, activating hydrogencarbonate by forming carboxy phosphate which reacts with ammonia to form carbamoyl phosphate. The protein is Carbamoyl phosphate synthase large chain of Rhizobium meliloti (strain 1021) (Ensifer meliloti).